Reading from the N-terminus, the 289-residue chain is Oxaloacetate decarboxylase 1 (289 aa).

Residue S50 participates in substrate binding. Residue D88 coordinates Mg(2+). Residues R159 and H235 each coordinate substrate.

The protein belongs to the isocitrate lyase/PEP mutase superfamily. Oxaloacetate decarboxylase family. In terms of assembly, homotetramer; dimer of dimers. Mg(2+) serves as cofactor.

It catalyses the reaction oxaloacetate + H(+) = pyruvate + CO2. In terms of biological role, catalyzes the decarboxylation of oxaloacetate into pyruvate. Seems to play a role in maintaining cellular concentrations of bicarbonate and pyruvate. The protein is Oxaloacetate decarboxylase 1 of Pseudomonas fluorescens (strain Pf0-1).